A 467-amino-acid chain; its full sequence is Glutamate--tRNA ligase (467 aa).

The short motif at 9–19 is the 'HIGH' region element; that stretch reads PSPTGFLHIGG. Residues 250–254 carry the 'KMSKS' region motif; that stretch reads KLSKR. Lys253 serves as a coordination point for ATP.

The protein belongs to the class-I aminoacyl-tRNA synthetase family. Glutamate--tRNA ligase type 1 subfamily. In terms of assembly, monomer.

The protein localises to the cytoplasm. The enzyme catalyses tRNA(Glu) + L-glutamate + ATP = L-glutamyl-tRNA(Glu) + AMP + diphosphate. In terms of biological role, catalyzes the attachment of glutamate to tRNA(Glu) in a two-step reaction: glutamate is first activated by ATP to form Glu-AMP and then transferred to the acceptor end of tRNA(Glu). In Mesomycoplasma hyopneumoniae (strain 7448) (Mycoplasma hyopneumoniae), this protein is Glutamate--tRNA ligase.